The primary structure comprises 203 residues: Large ribosomal subunit protein bL25 (203 aa).

The interval 1–21 (MMENLQVNQREKKTRHSSRQC) is disordered. Basic residues predominate over residues 12 to 21 (KKTRHSSRQC).

It belongs to the bacterial ribosomal protein bL25 family. CTC subfamily. In terms of assembly, part of the 50S ribosomal subunit; part of the 5S rRNA/L5/L18/L25 subcomplex. Contacts the 5S rRNA. Binds to the 5S rRNA independently of L5 and L18.

This is one of the proteins that binds to the 5S RNA in the ribosome where it forms part of the central protuberance. This chain is Large ribosomal subunit protein bL25, found in Clostridium perfringens (strain 13 / Type A).